A 97-amino-acid chain; its full sequence is Protein RESPONSE TO LOW SULFUR 3 (97 aa).

Residues 8–42 (VTVAAEEVEELRRRNGELEREMEEMKKEMVQLWRR) adopt a coiled-coil conformation.

The polypeptide is Protein RESPONSE TO LOW SULFUR 3 (Arabidopsis thaliana (Mouse-ear cress)).